The chain runs to 685 residues: Protein hook (685 aa).

The 117-residue stretch at 6–122 (MEIYESLIRW…RLLQLILGCA (117 aa)) folds into the Calponin-homology (CH) domain. Positions 134–570 (QIMELEESLQ…LLAADSRYKK (437 aa)) form a coiled coil. Disordered stretches follow at residues 430-449 (AAEDSESGNTMSKELHSSDV), 593-625 (LEKPSQDGEASSSSATGSGGDASTLTSTGSGRV), and 661-685 (PGQSFLSRQRQPAPRKPMNMPFAKK). A compositionally biased stretch (low complexity) spans 602-623 (ASSSSATGSGGDASTLTSTGSG). Residues 661–670 (PGQSFLSRQR) are compositionally biased toward polar residues.

The protein belongs to the hook family. Homodimer. Interacts with microtubules via its N-terminus.

The protein resides in the cytoplasm. It is found in the cytoskeleton. It localises to the endosome. Functionally, involved in endocytic trafficking. Probably acts as a cytoskeletal linker protein that tethers endosome vesicles to the cytoskeleton. The protein is Protein hook of Aedes aegypti (Yellowfever mosquito).